Here is a 71-residue protein sequence, read N- to C-terminus: UPF0346 protein SP70585_0986 (71 aa).

The protein belongs to the UPF0346 family.

This is UPF0346 protein SP70585_0986 from Streptococcus pneumoniae (strain 70585).